The sequence spans 154 residues: 3-hydroxyacyl-[acyl-carrier-protein] dehydratase FabZ (154 aa).

His-59 is an active-site residue.

It belongs to the thioester dehydratase family. FabZ subfamily.

It localises to the cytoplasm. It carries out the reaction a (3R)-hydroxyacyl-[ACP] = a (2E)-enoyl-[ACP] + H2O. Functionally, involved in unsaturated fatty acids biosynthesis. Catalyzes the dehydration of short chain beta-hydroxyacyl-ACPs and long chain saturated and unsaturated beta-hydroxyacyl-ACPs. In Bartonella bacilliformis (strain ATCC 35685 / KC583 / Herrer 020/F12,63), this protein is 3-hydroxyacyl-[acyl-carrier-protein] dehydratase FabZ.